The chain runs to 398 residues: MSKLVLVLNCGSSSLKFAVVDAETGAEHLTGLAECLGLPEARMKWKLDGKHEAQLGAGAAHVEALSFMVETILASKPELKANLGAIGHRIVHGGEQFTQSALITDDVLKGIQDAATFAPLHNPAHLIGIEAAKVNFPGLQNVAVFDTAFHQTMPEESYLYALPYNLYKEHGIRRYGMHGTSHLFITREVANLLDKPVEEVNIINCHLGNGASVCAIKNGKSVDTSMGLTPLEGLVMGTRCGDIDPAIVFHLHDALGYSVEQINNMLTKESGLAGLTEVTSDCRFVEDNYGEKEEATRAMDVFCHRLAKYVAGYTASMEGRLDAITFTGGIGENSGPIREMVLNRLGIFGIEVDGEANLKARFGGEGTITTANSRIPAMVISTNEELVIAEDAARLAGL.

Residue N9 participates in Mg(2+) binding. ATP is bound at residue K16. R89 contacts substrate. D146 serves as the catalytic Proton donor/acceptor. Residues 206 to 210 (HLGNG), 281 to 283 (DCR), and 329 to 333 (GIGEN) contribute to the ATP site. E384 is a binding site for Mg(2+).

It belongs to the acetokinase family. Homodimer. Requires Mg(2+) as cofactor. Mn(2+) is required as a cofactor.

The protein localises to the cytoplasm. It catalyses the reaction acetate + ATP = acetyl phosphate + ADP. The protein operates within metabolic intermediate biosynthesis; acetyl-CoA biosynthesis; acetyl-CoA from acetate: step 1/2. Functionally, catalyzes the formation of acetyl phosphate from acetate and ATP. Can also catalyze the reverse reaction. The polypeptide is Acetate kinase (Vibrio campbellii (strain ATCC BAA-1116)).